Consider the following 779-residue polypeptide: Phosphoribosylformylglycinamidine synthase subunit PurL (779 aa).

His52 is a catalytic residue. Positions 55 and 94 each coordinate ATP. Mg(2+) is bound at residue Glu96. Substrate-binding positions include 97–100 and Arg119; that span reads SHNH. The active-site Proton acceptor is the His98. Asp120 provides a ligand contact to Mg(2+). Residue Gln243 participates in substrate binding. A Mg(2+)-binding site is contributed by Asp271. 315–317 contributes to the substrate binding site; that stretch reads ESQ. ATP-binding residues include Asn523 and Gly560. Residue Asn561 coordinates Mg(2+). Ser563 lines the substrate pocket.

The protein belongs to the FGAMS family. In terms of assembly, monomer. Part of the FGAM synthase complex composed of 1 PurL, 1 PurQ and 2 PurS subunits.

It localises to the cytoplasm. It carries out the reaction N(2)-formyl-N(1)-(5-phospho-beta-D-ribosyl)glycinamide + L-glutamine + ATP + H2O = 2-formamido-N(1)-(5-O-phospho-beta-D-ribosyl)acetamidine + L-glutamate + ADP + phosphate + H(+). It functions in the pathway purine metabolism; IMP biosynthesis via de novo pathway; 5-amino-1-(5-phospho-D-ribosyl)imidazole from N(2)-formyl-N(1)-(5-phospho-D-ribosyl)glycinamide: step 1/2. Functionally, part of the phosphoribosylformylglycinamidine synthase complex involved in the purines biosynthetic pathway. Catalyzes the ATP-dependent conversion of formylglycinamide ribonucleotide (FGAR) and glutamine to yield formylglycinamidine ribonucleotide (FGAM) and glutamate. The FGAM synthase complex is composed of three subunits. PurQ produces an ammonia molecule by converting glutamine to glutamate. PurL transfers the ammonia molecule to FGAR to form FGAM in an ATP-dependent manner. PurS interacts with PurQ and PurL and is thought to assist in the transfer of the ammonia molecule from PurQ to PurL. This is Phosphoribosylformylglycinamidine synthase subunit PurL from Prochlorococcus marinus (strain MIT 9301).